The sequence spans 80 residues: Small ribosomal subunit protein bS18 (80 aa).

It belongs to the bacterial ribosomal protein bS18 family. As to quaternary structure, part of the 30S ribosomal subunit. Forms a tight heterodimer with protein bS6.

Binds as a heterodimer with protein bS6 to the central domain of the 16S rRNA, where it helps stabilize the platform of the 30S subunit. The polypeptide is Small ribosomal subunit protein bS18 (Methylocella silvestris (strain DSM 15510 / CIP 108128 / LMG 27833 / NCIMB 13906 / BL2)).